The following is a 130-amino-acid chain: Cytochrome c oxidase subunit 13, mitochondrial (130 aa).

Residues 1-31 (MSMMNRNIGFLSRTLKTSVPKRAGLLSFRAY) constitute a mitochondrion transit peptide. The Mitochondrial matrix portion of the chain corresponds to 32-61 (SNEAKVNWLEEVQAEEEHAKRSSEFWKKVT). The chain crosses the membrane as a helical span at residues 62–80 (YYIGGPALILASANAYYIY). The Mitochondrial intermembrane portion of the chain corresponds to 81 to 130 (CKHQEHAKHVEDTDPGYSFENLRFKKYPWGDGSKTLFWNDKVNHLKKDDE).

The protein belongs to the cytochrome c oxidase subunit 6A family. In terms of assembly, component of the cytochrome c oxidase (complex IV, CIV), a multisubunit enzyme composed of a catalytic core of 3 subunits and several supernumerary subunits. The complex exists as a monomer or a dimer and forms supercomplexes (SCs) in the inner mitochondrial membrane with ubiquinol-cytochrome c oxidoreductase (cytochrome b-c1 complex, complex III, CIII).

The protein localises to the mitochondrion inner membrane. The protein operates within energy metabolism; oxidative phosphorylation. Functionally, component of the cytochrome c oxidase, the last enzyme in the mitochondrial electron transport chain which drives oxidative phosphorylation. The respiratory chain contains 3 multisubunit complexes succinate dehydrogenase (complex II, CII), ubiquinol-cytochrome c oxidoreductase (cytochrome b-c1 complex, complex III, CIII) and cytochrome c oxidase (complex IV, CIV), that cooperate to transfer electrons derived from NADH and succinate to molecular oxygen, creating an electrochemical gradient over the inner membrane that drives transmembrane transport and the ATP synthase. Cytochrome c oxidase is the component of the respiratory chain that catalyzes the reduction of oxygen to water. Electrons originating from reduced cytochrome c in the intermembrane space (IMS) are transferred via the dinuclear copper A center (CU(A)) of subunit 2 and heme A of subunit 1 to the active site in subunit 1, a binuclear center (BNC) formed by heme A3 and copper B (CU(B)). The BNC reduces molecular oxygen to 2 water molecules unsing 4 electrons from cytochrome c in the IMS and 4 protons from the mitochondrial matrix. The polypeptide is Cytochrome c oxidase subunit 13, mitochondrial (cox13) (Schizosaccharomyces pombe (strain 972 / ATCC 24843) (Fission yeast)).